The sequence spans 1034 residues: Presequence protease, mitochondrial (1034 aa).

Residues 1–26 (MLKTRLKQSRAISRVVRRYACSHPIS) constitute a mitochondrion transit peptide. His-97 contacts Zn(2+). The active-site Proton acceptor is Glu-100. Zn(2+) is bound at residue His-101. Residue Glu-173 is part of the active site. Glu-198 contributes to the Zn(2+) binding site.

It belongs to the peptidase M16 family. PreP subfamily. In terms of assembly, monomer and homodimer; homodimerization is induced by binding of the substrate. Zn(2+) serves as cofactor.

The protein resides in the mitochondrion intermembrane space. Its subcellular location is the mitochondrion matrix. Its function is as follows. Degrades mitochondrial transit peptides after their cleavage in the intermembrane space or in the matrix, and presequence peptides; clearance of these peptides is required to keep the presequence processing machinery running. Preferentially cleaves the N-terminal side of paired basic amino acid residues. Also degrades other unstructured peptides. May function as an ATP-dependent peptidase as opposed to a metalloendopeptidase. In Candida albicans (strain SC5314 / ATCC MYA-2876) (Yeast), this protein is Presequence protease, mitochondrial (CYM1).